Reading from the N-terminus, the 82-residue chain is Putative defensin-like protein 191 (82 aa).

Positions 1-28 (MAKSVNATGFITYMVIFLILTGISRVKA) are cleaved as a signal peptide. Cystine bridges form between cysteine 33–cysteine 79, cysteine 46–cysteine 65, cysteine 51–cysteine 74, and cysteine 55–cysteine 76.

This sequence belongs to the DEFL family.

Its subcellular location is the secreted. The polypeptide is Putative defensin-like protein 191 (Arabidopsis thaliana (Mouse-ear cress)).